A 353-amino-acid chain; its full sequence is Major outer membrane protein (353 aa).

The signal sequence occupies residues 1-20 (MKKTIVALAVAAVAATSANA).

In terms of assembly, disulfide bond interactions within and between MOMP molecules and other components form high molecular-weight oligomers.

The protein localises to the cell outer membrane. Its function is as follows. Structural rigidity of the outer membrane of elementary bodies and porin forming, permitting diffusion of solutes through the intracellular reticulate body membrane. This chain is Major outer membrane protein (ompH), found in Pasteurella multocida.